Consider the following 385-residue polypeptide: NifS/IcsS protein homolog (385 aa).

Residues 69–70 (GT), N149, Q178, and 199–201 (SSH) contribute to the pyridoxal 5'-phosphate site. Residue K202 is modified to N6-(pyridoxal phosphate)lysine. Residue T237 coordinates pyridoxal 5'-phosphate. The active-site Cysteine persulfide intermediate is the C325. C325 is a binding site for [2Fe-2S] cluster.

The protein belongs to the class-V pyridoxal-phosphate-dependent aminotransferase family. NifS/IscS subfamily. Pyridoxal 5'-phosphate is required as a cofactor.

The sequence is that of NifS/IcsS protein homolog from Lactobacillus delbrueckii subsp. bulgaricus (strain ATCC 11842 / DSM 20081 / BCRC 10696 / JCM 1002 / NBRC 13953 / NCIMB 11778 / NCTC 12712 / WDCM 00102 / Lb 14).